The chain runs to 67 residues: Large ribosomal subunit protein uL29 (67 aa).

This sequence belongs to the universal ribosomal protein uL29 family.

The polypeptide is Large ribosomal subunit protein uL29 (Alkaliphilus metalliredigens (strain QYMF)).